The chain runs to 317 residues: Glycerol-3-phosphate dehydrogenase [NAD(P)+] (317 aa).

Serine 14, phenylalanine 15, arginine 35, and lysine 109 together coordinate NADPH. The sn-glycerol 3-phosphate site is built by lysine 109 and glycine 137. Alanine 141 contacts NADPH. Sn-glycerol 3-phosphate-binding residues include lysine 192, aspartate 248, serine 258, arginine 259, and asparagine 260. Catalysis depends on lysine 192, which acts as the Proton acceptor. Arginine 259 provides a ligand contact to NADPH. Residues leucine 283 and glutamate 285 each contribute to the NADPH site.

The protein belongs to the NAD-dependent glycerol-3-phosphate dehydrogenase family.

The protein resides in the cytoplasm. It catalyses the reaction sn-glycerol 3-phosphate + NAD(+) = dihydroxyacetone phosphate + NADH + H(+). It carries out the reaction sn-glycerol 3-phosphate + NADP(+) = dihydroxyacetone phosphate + NADPH + H(+). The protein operates within membrane lipid metabolism; glycerophospholipid metabolism. Its function is as follows. Catalyzes the reduction of the glycolytic intermediate dihydroxyacetone phosphate (DHAP) to sn-glycerol 3-phosphate (G3P), the key precursor for phospholipid synthesis. This is Glycerol-3-phosphate dehydrogenase [NAD(P)+] from Rickettsia akari (strain Hartford).